The primary structure comprises 349 residues: Small ribosomal subunit biogenesis GTPase RsgA (349 aa).

Residues 1 to 11 (MSKKKLSKGQQ) show a composition bias toward basic residues. Residues 1 to 29 (MSKKKLSKGQQRRVSANHQRRLKKTESKV) form a disordered region. The CP-type G domain occupies 102–272 (HSVLTRPDYY…VIDSPGVREF (171 aa)). GTP is bound by residues 158 to 161 (NKID) and 212 to 220 (GQSGVGKSS). Residues C296, C301, H303, and C309 each coordinate Zn(2+).

This sequence belongs to the TRAFAC class YlqF/YawG GTPase family. RsgA subfamily. In terms of assembly, monomer. Associates with 30S ribosomal subunit, binds 16S rRNA. Requires Zn(2+) as cofactor.

The protein localises to the cytoplasm. Its function is as follows. One of several proteins that assist in the late maturation steps of the functional core of the 30S ribosomal subunit. Helps release RbfA from mature subunits. May play a role in the assembly of ribosomal proteins into the subunit. Circularly permuted GTPase that catalyzes slow GTP hydrolysis, GTPase activity is stimulated by the 30S ribosomal subunit. The chain is Small ribosomal subunit biogenesis GTPase RsgA from Pectobacterium carotovorum subsp. carotovorum (strain PC1).